The primary structure comprises 602 residues: Serine/threonine-protein phosphatase 2A 56 kDa regulatory subunit delta isoform (602 aa).

Positions 1–13 (MPYKLKKEKEPPK) are enriched in basic and acidic residues. The disordered stretch occupies residues 1–96 (MPYKLKKEKE…QSSSRFNLSK (96 aa)). 5 consecutive repeat copies span residues 37 to 38 (QP), 39 to 40 (QP), 41 to 42 (QP), 43 to 44 (QP), and 45 to 46 (QP). Positions 37-52 (QPQPQPQPQPQAQSQP) are 8 X 2 AA approximate tandem repeats of Q-P. Residues 46 to 55 (PQAQSQPPSS) show a composition bias toward low complexity. One copy of the 6; approximate repeat lies at 47–48 (QA). The 7; approximate repeat unit spans residues 49–50 (QS). The stretch at 51 to 52 (QP) is repeat 8. Position 63 is a phosphothreonine (Thr-63). A phosphoserine mark is found at Ser-88, Ser-89, and Ser-90. Positions 523–530 (RAPPPLPP) match the SH3-binding; class I motif. Positions 548-565 (KRTVETEAVQMLKDIKKE) match the Nuclear localization signal motif. A phosphoserine mark is found at Ser-573 and Ser-598.

Belongs to the phosphatase 2A regulatory subunit B56 family. In terms of assembly, PP2A consists of a common heterodimeric core enzyme, composed of a 36 kDa catalytic subunit (subunit C) and a 65 kDa constant regulatory subunit (PR65 or subunit A), that associates with a variety of regulatory subunits. Proteins that associate with the core dimer include three families of regulatory subunits B (the R2/B/PR55/B55, R3/B''/PR72/PR130/PR59 and R5/B'/B56 families), the 48 kDa variable regulatory subunit, viral proteins, and cell signaling molecules. Interacts with the PP2A A subunit PPP2R1A. Interacts with SGO1. Interacts with ADCY8. As to expression, isoform Delta-2 is widely expressed. Isoform Delta-1 is highly expressed in brain.

The protein localises to the cytoplasm. Its subcellular location is the nucleus. Functionally, the B regulatory subunit might modulate substrate selectivity and catalytic activity, and might also direct the localization of the catalytic enzyme to a particular subcellular compartment. In Homo sapiens (Human), this protein is Serine/threonine-protein phosphatase 2A 56 kDa regulatory subunit delta isoform (PPP2R5D).